We begin with the raw amino-acid sequence, 292 residues long: Formamidopyrimidine-DNA glycosylase (292 aa).

The Schiff-base intermediate with DNA role is filled by Pro2. The Proton donor role is filled by Glu3. Catalysis depends on Lys58, which acts as the Proton donor; for beta-elimination activity. His98, Arg128, and Arg173 together coordinate DNA. An FPG-type zinc finger spans residues 258–292 (LVYDRAGQPCRVCATPVRQIVQGQRSTFYCPNCQH). Residue Arg282 is the Proton donor; for delta-elimination activity of the active site.

The protein belongs to the FPG family. As to quaternary structure, monomer. Zn(2+) is required as a cofactor.

The enzyme catalyses Hydrolysis of DNA containing ring-opened 7-methylguanine residues, releasing 2,6-diamino-4-hydroxy-5-(N-methyl)formamidopyrimidine.. The catalysed reaction is 2'-deoxyribonucleotide-(2'-deoxyribose 5'-phosphate)-2'-deoxyribonucleotide-DNA = a 3'-end 2'-deoxyribonucleotide-(2,3-dehydro-2,3-deoxyribose 5'-phosphate)-DNA + a 5'-end 5'-phospho-2'-deoxyribonucleoside-DNA + H(+). Functionally, involved in base excision repair of DNA damaged by oxidation or by mutagenic agents. Acts as a DNA glycosylase that recognizes and removes damaged bases. Has a preference for oxidized purines, such as 7,8-dihydro-8-oxoguanine (8-oxoG). Has AP (apurinic/apyrimidinic) lyase activity and introduces nicks in the DNA strand. Cleaves the DNA backbone by beta-delta elimination to generate a single-strand break at the site of the removed base with both 3'- and 5'-phosphates. The sequence is that of Formamidopyrimidine-DNA glycosylase from Cupriavidus necator (strain ATCC 17699 / DSM 428 / KCTC 22496 / NCIMB 10442 / H16 / Stanier 337) (Ralstonia eutropha).